Reading from the N-terminus, the 1470-residue chain is Actin cytoskeleton-regulatory complex protein pan1 (1470 aa).

The interval 1 to 157 is disordered; it reads MYSSSNSFLG…PPPKSSGSKI (157 aa). Residues 25–48 show a composition bias toward low complexity; that stretch reads QPPYSQFPQGQQQIPQQTGFQPQP. Residues 54–75 show a composition bias toward polar residues; the sequence is QSASHLQPQPTGFPTGQLQPQF. Low complexity predominate over residues 77 to 101; that stretch reads GFPGAAPQQQQQQLGGYQAPAQQPQ. Residues 129-139 show a composition bias toward polar residues; it reads RTSSEIANSFS. The region spanning 169–257 is the EH 1 domain; it reads DQAKFEQLFK…DKIKNEVSSM (89 aa). The region spanning 201-236 is the EF-hand 1 domain; it reads LPGSELSKIWVLSDTTKSGQLFFPEFALAMYLCNLR. 2 disordered regions span residues 282 to 305 and 343 to 377; these read DAPL…QPSN and QATG…GPRP. Residues 292-301 show a composition bias toward pro residues; the sequence is PPAPQHPKPQ. Low complexity predominate over residues 348–360; that stretch reads PGQSQQQYLQPQP. Positions 458 to 547 constitute an EH 2 domain; that stretch reads EKKIYDDLFR…PELIPPSTRN (90 aa). The region spanning 491–526 is the EF-hand 2 domain; it reads LDRKDLERIWTLADPNNRGRLNMDEFAVAMHLIYRK. Disordered regions lie at residues 614–641, 794–864, 886–1087, and 1099–1470; these read GYRS…SEEE, ELAG…HERR, GSRT…LKEK, and EQVR…RVLD. Residues 627-637 are compositionally biased toward low complexity; that stretch reads ARPSSPAASQA. Positions 633–758 form a coiled coil; that stretch reads AASQASEEEL…LFRLKDAKAH (126 aa). Basic and acidic residues-rich tracts occupy residues 809–864 and 892–910; these read AAAR…HERR and VRKE…HEEP. Residues 917 to 932 are compositionally biased toward low complexity; sequence LSPAPSAGSAGSLPGS. 5 stretches are compositionally biased toward basic and acidic residues: residues 933–951, 971–1006, 1052–1087, 1099–1127, and 1134–1146; these read THED…RIAE, RQER…EEQR, AARE…LKEK, EQVR…EKEA, and AEIE…ERQL. Positions 963–1159 form a coiled coil; that stretch reads DTSETLLQRQ…LEGLDEESSS (197 aa). Acidic residues predominate over residues 1151–1163; the sequence is EGLDEESSSDDEG. The segment covering 1169-1180 has biased composition (polar residues); the sequence is PEDSTPTQSQLL. Low complexity predominate over residues 1181-1195; that stretch reads PTVTPAAPVSAPESE. The segment covering 1243-1269 has biased composition (polar residues); the sequence is PNVTSPRADVHSTNPFHRLAQQESSKP. Residues 1277-1286 are compositionally biased toward basic and acidic residues; that stretch reads LERKSRARPE. The span at 1340–1352 shows a compositional bias: polar residues; it reads SKSSTPVQDSPVT. Composition is skewed to pro residues over residues 1367 to 1380 and 1389 to 1433; these read AAPP…PPAA and APPP…PTPA. Residues 1437–1454 form the WH2 domain; sequence DRSALLASIQMGKGLRKV. Over residues 1457–1470 the composition is skewed to polar residues; sequence NDRSTSSSAGRVLD.

It belongs to the PAN1 family. As to quaternary structure, component of the PAN1 actin cytoskeleton-regulatory complex.

It localises to the cell membrane. The protein localises to the endosome membrane. It is found in the cytoplasm. The protein resides in the cytoskeleton. Its subcellular location is the actin patch. Functionally, component of the PAN1 actin cytoskeleton-regulatory complex required for the internalization of endosomes during actin-coupled endocytosis. The complex links the site of endocytosis to the cell membrane-associated actin cytoskeleton. Mediates uptake of external molecules and vacuolar degradation of plasma membrane proteins. Plays a role in the proper organization of the cell membrane-associated actin cytoskeleton and promotes its destabilization. This is Actin cytoskeleton-regulatory complex protein pan1 (pan1) from Neosartorya fischeri (strain ATCC 1020 / DSM 3700 / CBS 544.65 / FGSC A1164 / JCM 1740 / NRRL 181 / WB 181) (Aspergillus fischerianus).